The chain runs to 274 residues: Imidazole glycerol phosphate synthase subunit HisF (274 aa).

Residues Asp-11 and Asp-134 contribute to the active site.

The protein belongs to the HisA/HisF family. In terms of assembly, heterodimer of HisH and HisF.

It is found in the cytoplasm. The catalysed reaction is 5-[(5-phospho-1-deoxy-D-ribulos-1-ylimino)methylamino]-1-(5-phospho-beta-D-ribosyl)imidazole-4-carboxamide + L-glutamine = D-erythro-1-(imidazol-4-yl)glycerol 3-phosphate + 5-amino-1-(5-phospho-beta-D-ribosyl)imidazole-4-carboxamide + L-glutamate + H(+). Its pathway is amino-acid biosynthesis; L-histidine biosynthesis; L-histidine from 5-phospho-alpha-D-ribose 1-diphosphate: step 5/9. Its function is as follows. IGPS catalyzes the conversion of PRFAR and glutamine to IGP, AICAR and glutamate. The HisF subunit catalyzes the cyclization activity that produces IGP and AICAR from PRFAR using the ammonia provided by the HisH subunit. The protein is Imidazole glycerol phosphate synthase subunit HisF of Methanosphaera stadtmanae (strain ATCC 43021 / DSM 3091 / JCM 11832 / MCB-3).